A 165-amino-acid polypeptide reads, in one-letter code: MSLLLPDSGLIFWMLLSFGIVFAVLAKYGFPVIIKMVEGRKTYIDESLEVAREANAQLSRLKEEGEAIVAAANKEQGRIMKEAMQEREKIIYEARKQAEIAAQKELDEVKRQIQIEKDEAIRDIRRQVALLSVDIAEKVIRKNLDDKQEQMGMIDRMLDEVLTKN.

The chain crosses the membrane as a helical span at residues 10 to 30; it reads LIFWMLLSFGIVFAVLAKYGF.

This sequence belongs to the ATPase B chain family. As to quaternary structure, F-type ATPases have 2 components, F(1) - the catalytic core - and F(0) - the membrane proton channel. F(1) has five subunits: alpha(3), beta(3), gamma(1), delta(1), epsilon(1). F(0) has three main subunits: a(1), b(2) and c(10-14). The alpha and beta chains form an alternating ring which encloses part of the gamma chain. F(1) is attached to F(0) by a central stalk formed by the gamma and epsilon chains, while a peripheral stalk is formed by the delta and b chains.

The protein localises to the cell inner membrane. Functionally, f(1)F(0) ATP synthase produces ATP from ADP in the presence of a proton or sodium gradient. F-type ATPases consist of two structural domains, F(1) containing the extramembraneous catalytic core and F(0) containing the membrane proton channel, linked together by a central stalk and a peripheral stalk. During catalysis, ATP synthesis in the catalytic domain of F(1) is coupled via a rotary mechanism of the central stalk subunits to proton translocation. Component of the F(0) channel, it forms part of the peripheral stalk, linking F(1) to F(0). The protein is ATP synthase subunit b of Bacteroides fragilis (strain ATCC 25285 / DSM 2151 / CCUG 4856 / JCM 11019 / LMG 10263 / NCTC 9343 / Onslow / VPI 2553 / EN-2).